A 423-amino-acid chain; its full sequence is Mannose-6-phosphate isomerase (423 aa).

Position 2 is an N-acetylalanine (Ala-2). Ser-102 and Ser-108 each carry phosphoserine. Residues Gln-110, His-112, Glu-137, and His-276 each coordinate Zn(2+). Arg-295 is a catalytic residue.

The protein belongs to the mannose-6-phosphate isomerase type 1 family. The cofactor is Zn(2+).

It is found in the cytoplasm. The catalysed reaction is D-mannose 6-phosphate = D-fructose 6-phosphate. The protein operates within nucleotide-sugar biosynthesis; GDP-alpha-D-mannose biosynthesis; alpha-D-mannose 1-phosphate from D-fructose 6-phosphate: step 1/2. Isomerase that catalyzes the interconversion of fructose-6-P and mannose-6-P and has a critical role in the supply of D-mannose derivatives required for many eukaryotic glycosylation reactions. The sequence is that of Mannose-6-phosphate isomerase from Rattus norvegicus (Rat).